The sequence spans 407 residues: GTPase Obg (407 aa).

The region spanning 1–159 (MKFVDEVSIR…RDLKLELKVL (159 aa)) is the Obg domain. Positions 127 to 149 (NTRFKSSTNRAPRQTTPGKPGDQ) are disordered. The span at 129–143 (RFKSSTNRAPRQTTP) shows a compositional bias: polar residues. In terms of domain architecture, OBG-type G spans 160-333 (ADVGLLGLPN…LTRDIMRYLE (174 aa)). GTP is bound by residues 166–173 (GLPNAGKS), 191–195 (FTTLV), 213–216 (DIPG), 283–286 (NKCD), and 314–316 (SAI). Mg(2+) contacts are provided by S173 and T193. Positions 376–407 (SGVKSVHDIGDDDWDEEDVDDEDGPEIIYVRD) are disordered. The segment covering 385–400 (GDDDWDEEDVDDEDGP) has biased composition (acidic residues).

The protein belongs to the TRAFAC class OBG-HflX-like GTPase superfamily. OBG GTPase family. Monomer. The cofactor is Mg(2+).

The protein resides in the cytoplasm. Functionally, an essential GTPase which binds GTP, GDP and possibly (p)ppGpp with moderate affinity, with high nucleotide exchange rates and a fairly low GTP hydrolysis rate. Plays a role in control of the cell cycle, stress response, ribosome biogenesis and in those bacteria that undergo differentiation, in morphogenesis control. The chain is GTPase Obg from Pseudomonas savastanoi pv. phaseolicola (strain 1448A / Race 6) (Pseudomonas syringae pv. phaseolicola (strain 1448A / Race 6)).